A 588-amino-acid chain; its full sequence is Sperm-associated microtubule inner protein 4 (588 aa).

Phosphothreonine is present on Thr219. Residues Ser406, Ser421, and Ser427 each carry the phosphoserine modification. Tyr441 is subject to Phosphotyrosine. Ser457, Ser484, and Ser516 each carry phosphoserine.

As to expression, predominantly expressed in the testes.

It localises to the cytoplasm. Its subcellular location is the cytoskeleton. The protein localises to the microtubule organizing center. The protein resides in the centrosome. It is found in the flagellum axoneme. Microtubule inner protein (MIP) part of the dynein-decorated doublet microtubules (DMTs) in flagellum axoneme. May serve to reinforce and thus stabilize the microtubule structure in the sperm flagella. This Mus musculus (Mouse) protein is Sperm-associated microtubule inner protein 4 (Spmip4).